The sequence spans 143 residues: uncharacterized protein (143 aa).

This is an uncharacterized protein from Thermoproteus tenax virus 1 (strain KRA1) (TTV1).